Here is a 291-residue protein sequence, read N- to C-terminus: Taste receptor type 2 member 16 (291 aa).

A topological domain (extracellular) is located at residue Met1. The helical transmembrane segment at Ile2–Ile22 threads the bilayer. At Val23–Arg41 the chain is on the cytoplasmic side. The chain crosses the membrane as a helical span at residues Leu42–Ala62. The Extracellular portion of the chain corresponds to Ser63–Thr84. Asn80 is a glycosylation site (N-linked (GlcNAc...) asparagine). A helical transmembrane segment spans residues Trp85–Ile105. The Cytoplasmic segment spans residues Lys106–Leu125. A helical transmembrane segment spans residues Phe126–Ile146. Residues Gly147–Thr182 are Extracellular-facing. Asn163 carries N-linked (GlcNAc...) asparagine glycosylation. The helical transmembrane segment at Val183 to Leu203 threads the bilayer. Topologically, residues Thr204–Ser228 are cytoplasmic. Residues Leu229–Gly249 form a helical membrane-spanning segment. At Thr250–Trp257 the chain is on the extracellular side. Residues Leu258–Leu278 form a helical membrane-spanning segment. Over Ser279–Cys291 the chain is Cytoplasmic.

The protein belongs to the G-protein coupled receptor T2R family. As to quaternary structure, interacts with RTP3 and RTP4. In terms of tissue distribution, expressed in a subset of gustducin-positive taste receptor cells of the tongue. Expressed in circumvallate papillae and testis.

It is found in the cell membrane. Gustducin-coupled receptor implicated in the perception of bitter compounds in the oral cavity and the gastrointestinal tract. Signals through PLCB2 and the calcium-regulated cation channel TRPM5. The polypeptide is Taste receptor type 2 member 16 (TAS2R16) (Homo sapiens (Human)).